A 274-amino-acid chain; its full sequence is Lectizyme (274 aa).

An N-terminal signal peptide occupies residues 1–16 (MKFFAVFALCVASVSA). The region spanning 32 to 268 (IINGHEAEKG…FDKWIEDSIE (237 aa)) is the Peptidase S1 domain. Cysteine 57 and cysteine 73 are oxidised to a cystine. Residues histidine 72 and aspartate 119 each act as charge relay system in the active site. Intrachain disulfides connect cysteine 188–cysteine 204 and cysteine 215–cysteine 244. Catalysis depends on serine 219, which acts as the Charge relay system.

The protein belongs to the peptidase S1 family. As to expression, expressed in the midgut.

The protein localises to the secreted. Functionally, protein with lectin and protease activity involved in the establishment of trypanosome infections in tsetse flies. Binds D-glucosamine and agglutinates bloodstream-form trypanosomes and rabbit red blood cells. Capable of inducing transformation of bloodstream-form trypanosomes into procyclic (midgut) forms in vitro. This is Lectizyme (Gpl) from Glossina austeni (Savannah tsetse fly).